The chain runs to 489 residues: Glycogen synthase (489 aa).

Arg20 is a binding site for ADP-alpha-D-glucose.

Belongs to the glycosyltransferase 1 family. Bacterial/plant glycogen synthase subfamily.

It carries out the reaction [(1-&gt;4)-alpha-D-glucosyl](n) + ADP-alpha-D-glucose = [(1-&gt;4)-alpha-D-glucosyl](n+1) + ADP + H(+). It functions in the pathway glycan biosynthesis; glycogen biosynthesis. Functionally, synthesizes alpha-1,4-glucan chains using ADP-glucose. This Chlorobium chlorochromatii (strain CaD3) protein is Glycogen synthase.